We begin with the raw amino-acid sequence, 53 residues long: Large ribosomal subunit protein bL33A (53 aa).

This sequence belongs to the bacterial ribosomal protein bL33 family.

The protein is Large ribosomal subunit protein bL33A (rpmG1) of Mycoplasma pneumoniae (strain ATCC 29342 / M129 / Subtype 1) (Mycoplasmoides pneumoniae).